The primary structure comprises 504 residues: Hexokinase-10 (504 aa).

The chain crosses the membrane as a helical span at residues 7 to 29 (GWVRVAAVGWAVAACAVAAGMVA). A Hexokinase domain is found at 39 to 493 (NRAVAVVRDL…SGTGAALLAA (455 aa)). Residues 94–226 (DGSEEGISYA…GLNMKVNVLV (133 aa)) are hexokinase small subdomain. ADP contacts are provided by Gly108 and Thr109. Residues Thr192, Lys193, Asn227, Asn254, Glu282, and Glu313 each coordinate D-glucose. The segment at 227–482 (NNTVGTLALG…ATVSLRVMEE (256 aa)) is hexokinase large subdomain. Gly447 serves as a coordination point for ADP.

The protein belongs to the hexokinase family. Expressed specifically in stamen.

It is found in the plastid. It localises to the chloroplast outer membrane. It carries out the reaction a D-hexose + ATP = a D-hexose 6-phosphate + ADP + H(+). The enzyme catalyses D-fructose + ATP = D-fructose 6-phosphate + ADP + H(+). It catalyses the reaction D-glucose + ATP = D-glucose 6-phosphate + ADP + H(+). It participates in carbohydrate metabolism; hexose metabolism. It functions in the pathway carbohydrate degradation; glycolysis; D-glyceraldehyde 3-phosphate and glycerone phosphate from D-glucose: step 1/4. Fructose and glucose phosphorylating enzyme. The chain is Hexokinase-10 (HXK10) from Oryza sativa subsp. japonica (Rice).